The primary structure comprises 359 residues: Mineralocorticoid receptor (359 aa).

The segment at residues F1–S49 is a DNA-binding region (nuclear receptor). Zn(2+)-binding residues include C13, C19, C29, and C32. Residues C13–C37 form an NR C4-type zinc finger. A disordered region spans residues K48–V96. The interval K50 to P107 is hinge. Residues Y108–I339 form the NR LBD domain. N145 and Q151 together coordinate 21-hydroxyprogesterone. Aldosterone contacts are provided by N145 and Q151. The progesterone site is built by N145 and Q151. The segment at K157–K160 is important for coactivator binding. 21-hydroxyprogesterone is bound by residues R192 and T320. Aldosterone-binding residues include R192 and T320. Positions 192 and 320 each coordinate progesterone.

This sequence belongs to the nuclear hormone receptor family. NR3 subfamily.

It is found in the cytoplasm. The protein localises to the nucleus. Receptor for both mineralocorticoids (MC) such as cortisol. Binds to mineralocorticoid response elements (MRE) and transactivates target genes. The effect of MC is to increase ion and water transport and thus raise extracellular fluid volume and blood pressure and lower potassium levels. This Oncorhynchus mykiss (Rainbow trout) protein is Mineralocorticoid receptor (nr3c2).